The chain runs to 234 residues: Phosphoribosylaminoimidazole-succinocarboxamide synthase (234 aa).

This sequence belongs to the SAICAR synthetase family.

It carries out the reaction 5-amino-1-(5-phospho-D-ribosyl)imidazole-4-carboxylate + L-aspartate + ATP = (2S)-2-[5-amino-1-(5-phospho-beta-D-ribosyl)imidazole-4-carboxamido]succinate + ADP + phosphate + 2 H(+). It functions in the pathway purine metabolism; IMP biosynthesis via de novo pathway; 5-amino-1-(5-phospho-D-ribosyl)imidazole-4-carboxamide from 5-amino-1-(5-phospho-D-ribosyl)imidazole-4-carboxylate: step 1/2. The chain is Phosphoribosylaminoimidazole-succinocarboxamide synthase from Pyrococcus furiosus (strain ATCC 43587 / DSM 3638 / JCM 8422 / Vc1).